We begin with the raw amino-acid sequence, 461 residues long: MDRRIFGIETEFGITFSSKDSRPLSPEEVARYLFRRVVSWGRSSNVFLANGSRLYLDVGSHPEYATAECDEIGQLIAHDRAGELILNELVAEAEKRLNLEGFAGSVYLFKNNTDSAGNSYGSHENYLIGRRGEFARLAEILIPFLVTRQLIAGAGKVHQNAGQANYSFSQRAEHIWEGISSATTRSRPIINTRDEPHADAELYRRLHVIVGDSNMSETTTMLKVGTIDLILRMVEDGVIMRDLRMENPIRSIREISQDLTGMAPVKLANGRVTNALEIQREYFEKVSEYLLTAGAHHALVPRIMDLWQRTLNAIEQQDFSSIETEIDWAIKKKLLDAYQAKNSLTLNSPRLAQIDLAYHDIATDRGLYYLLQKRGAVARVNEDGQAMAAIEAPPATTRAALRGKFVKAAQSAGRDYTVDWVHLKLNDQAHQTVLCKDPFRNTDERVDALIASLGTESDFSD.

Glu9 contributes to the Mg(2+) binding site. Arg53 lines the ATP pocket. Residue Tyr55 coordinates Mg(2+). The active-site Proton acceptor is Asp57. A Mg(2+)-binding site is contributed by Glu63. ATP is bound by residues Thr66 and Trp420.

It belongs to the Pup ligase/Pup deamidase family. Pup-conjugating enzyme subfamily.

The catalysed reaction is ATP + [prokaryotic ubiquitin-like protein]-L-glutamate + [protein]-L-lysine = ADP + phosphate + N(6)-([prokaryotic ubiquitin-like protein]-gamma-L-glutamyl)-[protein]-L-lysine.. The protein operates within protein degradation; proteasomal Pup-dependent pathway. It functions in the pathway protein modification; protein pupylation. Catalyzes the covalent attachment of the prokaryotic ubiquitin-like protein modifier Pup to the proteasomal substrate proteins, thereby targeting them for proteasomal degradation. This tagging system is termed pupylation. The ligation reaction involves the side-chain carboxylate of the C-terminal glutamate of Pup and the side-chain amino group of a substrate lysine. The sequence is that of Pup--protein ligase from Renibacterium salmoninarum (strain ATCC 33209 / DSM 20767 / JCM 11484 / NBRC 15589 / NCIMB 2235).